The primary structure comprises 1576 residues: Disco-interacting protein 2 homolog B (1576 aa).

Ser9, Ser50, and Ser53 each carry phosphoserine. A DMAP1-binding domain is found at 12 to 131 (AVAALPPEVR…PMPTKRRSTF (120 aa)). The disordered stretch occupies residues 31 to 167 (LSEGDITQKG…AALSAALQQS (137 aa)). A compositionally biased stretch (polar residues) spans 52 to 62 (YSPQTQETDSA). The segment covering 70–83 (QTPAPSAAQTSAPS) has biased composition (low complexity). Thr71 is subject to Phosphothreonine. Residues 92 to 104 (GARDERYRSDIHT) are compositionally biased toward basic and acidic residues. Ser100 carries the phosphoserine modification. Thr140 carries the post-translational modification Phosphothreonine. Ser146, Ser148, and Ser153 each carry phosphoserine. Residues 155-167 (RRQAALSAALQQS) show a composition bias toward low complexity. Ser178, Ser193, and Ser203 each carry phosphoserine. The tract at residues 179-201 (IQGSSTSSSASSTLSHGEVKGTS) is disordered. Residues 182 to 193 (SSTSSSASSTLS) show a composition bias toward low complexity. Positions 217–246 (SAPPDVTTTTSSSSSSSSIRPANIDLPPSG) are disordered. Positions 223–234 (TTTTSSSSSSSS) are enriched in low complexity. Ser259 is modified (phosphoserine).

This sequence belongs to the DIP2 family. As to quaternary structure, interacts with alpha-tubulin. As to expression, moderately expressed in adult brain, placenta, skeletal muscle, heart, kidney, pancreas, lung, spleen and colon. Expression was weaker in adult liver, kidney, spleen, and ovary, and in fetal brain and liver. In the brain, it is expressed in the cerebral cortex; the frontal, parietal, occipital and temporal lobes; the paracentral gyrus; the pons; the corpus callosum and the hippocampus. Highest expression levels in the brain were found in the cerebral cortex and the frontal and parietal lobes.

It is found in the cell projection. Its subcellular location is the dendrite. The protein resides in the axon. The protein localises to the perikaryon. Its function is as follows. Negatively regulates axonal outgrowth and is essential for normal synaptic transmission. Not required for regulation of axon polarity. Promotes acetylation of alpha-tubulin. The sequence is that of Disco-interacting protein 2 homolog B (DIP2B) from Homo sapiens (Human).